A 187-amino-acid polypeptide reads, in one-letter code: Ribulose bisphosphate carboxylase small subunit, chloroplastic (187 aa).

Residues 1–56 (MASSVMSTATVATGANAAQASMIASFNGLKSAASFPVTRKQDLDITSIASNGGRVE) constitute a chloroplast transit peptide.

Belongs to the RuBisCO small chain family. Heterohexadecamer of 8 large and 8 small subunits.

The protein resides in the plastid. It localises to the chloroplast. RuBisCO catalyzes two reactions: the carboxylation of D-ribulose 1,5-bisphosphate, the primary event in carbon dioxide fixation, as well as the oxidative fragmentation of the pentose substrate. Both reactions occur simultaneously and in competition at the same active site. Although the small subunit is not catalytic it is essential for maximal activity. The polypeptide is Ribulose bisphosphate carboxylase small subunit, chloroplastic (Capsicum annuum (Capsicum pepper)).